We begin with the raw amino-acid sequence, 243 residues long: MRPQGPAASPQRLRGLLLLLLLQLPAPSSASEIPKGKQKAQLRQREVVDLYNGMCLQGPAGVPGRDGSPGANGIPGTPGIPGRDGFKGEKGECLRESFEESWTPNYKQCSWSSLNYGIDLGKIAECTFTKMRSNSALRVLFSGSLRLKCRNACCQRWYFTFNGAECSGPLPIEAIIYLDQGSPEMNSTINIHRTSSVEGLCEGIGAGLVDVAIWVGTCSDYPKGDASTGWNSVSRIIIEELPK.

An N-terminal signal peptide occupies residues 1 to 30 (MRPQGPAASPQRLRGLLLLLLLQLPAPSSA). The Collagen-like domain maps to 57-90 (QGPAGVPGRDGSPGANGIPGTPGIPGRDGFKGEK). Positions 62–85 (VPGRDGSPGANGIPGTPGIPGRDG) are disordered. An N-linked (GlcNAc...) asparagine glycan is attached at Asn186.

In terms of processing, N-glycosylated. Isoform 1 is expressed in calcified atherosclerotic plaque and chondrocyte-like cells.

It localises to the secreted. It is found in the extracellular space. The protein localises to the extracellular matrix. May act as a negative regulator of collagen matrix deposition. In Homo sapiens (Human), this protein is Collagen triple helix repeat-containing protein 1 (CTHRC1).